Here is a 450-residue protein sequence, read N- to C-terminus: MREIISIHIGQAGIQVGNSCWELYCLEHGIQPDGMMPSDTTVGVAHDAFNTFFSETGAGKHVPRAVFVDLEPTVIDEVRTGTYRQLFHPEQLISGKEDAANNFARGHYTVGKEIVDLCLDRVRKLADNCTGLQGFLVFNAVGGGTGSGLGSLLLERLSVDYGKKSKLGFTIYPSPQVSTAVVEPYNSVLSTHSLLEHTDVAVLLDNEAIYDICRRSLDIERPTYTNLNRLISQIISSLTTSLRFDGAINVDITEFQTNLVPYPRIHFMLSSYAPVISAAKAYHEQLSVPEITNAVFEPASMMAKCDPRHGKYMACCLMYRGDVVPKDVNAAVGTIKTKRTVQFVDWCPTGFKCGINYQPPTVVPGGDLAKVQRAVCMISNNTAVAEVFSRIDHKFDLMYAKRAFVHWYVGEGMEEGEFSEAREDLAALEKDYEEVGAEGGDDEEDEGEDY.

Residues Gln-11, Glu-71, Gly-144, Thr-145, Thr-179, Asn-206, and Asn-228 each coordinate GTP. Mg(2+) is bound at residue Glu-71. Glu-254 is a catalytic residue. Thr-349 carries the post-translational modification Phosphothreonine. Residues 429–450 are disordered; sequence EKDYEEVGAEGGDDEEDEGEDY. Positions 431 to 450 are enriched in acidic residues; the sequence is DYEEVGAEGGDDEEDEGEDY.

It belongs to the tubulin family. As to quaternary structure, dimer of alpha and beta chains. A typical microtubule is a hollow water-filled tube with an outer diameter of 25 nm and an inner diameter of 15 nM. Alpha-beta heterodimers associate head-to-tail to form protofilaments running lengthwise along the microtubule wall with the beta-tubulin subunit facing the microtubule plus end conferring a structural polarity. Microtubules usually have 13 protofilaments but different protofilament numbers can be found in some organisms and specialized cells. It depends on Mg(2+) as a cofactor. Post-translationally, undergoes a tyrosination/detyrosination cycle, the cyclic removal and re-addition of a C-terminal tyrosine residue by the enzymes tubulin tyrosine carboxypeptidase (TTCP) and tubulin tyrosine ligase (TTL), respectively.

The protein localises to the cytoplasm. Its subcellular location is the cytoskeleton. It catalyses the reaction GTP + H2O = GDP + phosphate + H(+). Tubulin is the major constituent of microtubules, a cylinder consisting of laterally associated linear protofilaments composed of alpha- and beta-tubulin heterodimers. Microtubules grow by the addition of GTP-tubulin dimers to the microtubule end, where a stabilizing cap forms. Below the cap, tubulin dimers are in GDP-bound state, owing to GTPase activity of alpha-tubulin. This Arabidopsis thaliana (Mouse-ear cress) protein is Tubulin alpha-5 chain (TUBA5).